A 572-amino-acid chain; its full sequence is Golgi apyrase (572 aa).

Topologically, residues methionine 1 to lysine 470 are lumenal. The active-site Proton acceptor is the glutamate 145. The helical transmembrane segment at leucine 471–glycine 491 threads the bilayer. The Cytoplasmic portion of the chain corresponds to tyrosine 492–proline 572.

Belongs to the GDA1/CD39 NTPase family. Ca(2+) serves as cofactor. It depends on Mg(2+) as a cofactor. The cofactor is Mn(2+).

The protein localises to the golgi apparatus. Its subcellular location is the membrane. It carries out the reaction a ribonucleoside 5'-triphosphate + 2 H2O = a ribonucleoside 5'-phosphate + 2 phosphate + 2 H(+). Its pathway is protein modification; protein glycosylation. In terms of biological role, catalyzes the hydrolysis of phosphoanhydride bonds of nucleoside tri- and di-phosphates. Required for Golgi glycosylation and cell wall integrity. Involved in N-mannosylation of proteins in Golgi. This is Golgi apyrase from Schizosaccharomyces pombe (strain 972 / ATCC 24843) (Fission yeast).